A 289-amino-acid chain; its full sequence is Zinc finger matrin-type protein 3 (289 aa).

Matrin-type zinc fingers lie at residues leucine 70–asparagine 100 and aspartate 147–leucine 177. 2 disordered regions span residues alanine 180–glutamate 202 and glutamate 265–glutamine 289. Residues phenylalanine 245–glutamate 275 form a Matrin-type 3 zinc finger. The segment covering glutamate 265–methionine 282 has biased composition (basic and acidic residues).

Interacts with dsRNA. Highly expressed in brain, gut, lung, and testis.

Its subcellular location is the nucleus. The protein localises to the nucleolus. Functionally, acts as a bona fide target gene of p53/TP53. May play a role in the TP53-dependent growth regulatory pathway. May contribute to TP53-mediated apoptosis by regulation of TP53 expression and translocation to the nucleus and nucleolus. The polypeptide is Zinc finger matrin-type protein 3 (Rattus norvegicus (Rat)).